The chain runs to 355 residues: Peptide chain release factor 1 (355 aa).

Q230 bears the N5-methylglutamine mark.

This sequence belongs to the prokaryotic/mitochondrial release factor family. In terms of processing, methylated by PrmC. Methylation increases the termination efficiency of RF1.

It localises to the cytoplasm. Functionally, peptide chain release factor 1 directs the termination of translation in response to the peptide chain termination codons UAG and UAA. The chain is Peptide chain release factor 1 from Geobacter metallireducens (strain ATCC 53774 / DSM 7210 / GS-15).